A 363-amino-acid polypeptide reads, in one-letter code: tRNA/tmRNA (uracil-C(5))-methyltransferase (363 aa).

S-adenosyl-L-methionine contacts are provided by Gln-187, Tyr-215, Asn-220, Glu-236, and Asp-296. Residue Cys-321 is the Nucleophile of the active site. Catalysis depends on Glu-355, which acts as the Proton acceptor.

The protein belongs to the class I-like SAM-binding methyltransferase superfamily. RNA M5U methyltransferase family. TrmA subfamily.

The catalysed reaction is uridine(54) in tRNA + S-adenosyl-L-methionine = 5-methyluridine(54) in tRNA + S-adenosyl-L-homocysteine + H(+). It catalyses the reaction uridine(341) in tmRNA + S-adenosyl-L-methionine = 5-methyluridine(341) in tmRNA + S-adenosyl-L-homocysteine + H(+). In terms of biological role, dual-specificity methyltransferase that catalyzes the formation of 5-methyluridine at position 54 (m5U54) in all tRNAs, and that of position 341 (m5U341) in tmRNA (transfer-mRNA). The sequence is that of tRNA/tmRNA (uracil-C(5))-methyltransferase from Pseudomonas aeruginosa (strain ATCC 15692 / DSM 22644 / CIP 104116 / JCM 14847 / LMG 12228 / 1C / PRS 101 / PAO1).